Consider the following 48-residue polypeptide: ATP synthase protein 8 (48 aa).

The helical transmembrane segment at 13–33 (LTYGFLLLIILLVLFSQFLLP) threads the bilayer.

Belongs to the ATPase protein 8 family. As to quaternary structure, F-type ATPases have 2 components, CF(1) - the catalytic core - and CF(0) - the membrane proton channel.

Its subcellular location is the mitochondrion membrane. In terms of biological role, mitochondrial membrane ATP synthase (F(1)F(0) ATP synthase or Complex V) produces ATP from ADP in the presence of a proton gradient across the membrane which is generated by electron transport complexes of the respiratory chain. F-type ATPases consist of two structural domains, F(1) - containing the extramembraneous catalytic core and F(0) - containing the membrane proton channel, linked together by a central stalk and a peripheral stalk. During catalysis, ATP synthesis in the catalytic domain of F(1) is coupled via a rotary mechanism of the central stalk subunits to proton translocation. Part of the complex F(0) domain. Minor subunit located with subunit a in the membrane. This Wickerhamomyces canadensis (Yeast) protein is ATP synthase protein 8 (ATP8).